Reading from the N-terminus, the 1116-residue chain is Large proline-rich protein bag6-B (1116 aa).

Positions 7-82 (MDVTVKTLDS…HLVERAPPQT (76 aa)) constitute a Ubiquitin-like domain. 7 disordered regions span residues 76 to 114 (ERAPPQTQTSTSGPSTSSSTSPSSSNAAPVPGAPERNGN), 170 to 221 (EGQP…PSEY), 329 to 385 (STTG…HPHP), 473 to 502 (PAAPSFNFQPGAAATTPPAPGGATTTAPGA), 533 to 589 (GGSS…GTDQ), 640 to 678 (VPVSTSPPQSASQAPPPPSSPAPPAHSAPPPAAAPESLP), and 1058 to 1080 (TGAKPESSTECVKRELDNSEAQG). A compositionally biased stretch (low complexity) spans 79-100 (PPQTQTSTSGPSTSSSTSPSSS). Residues 194–207 (RETLPQTTQNADGQ) show a composition bias toward polar residues. Residues 208 to 219 (SNSTPTSHPSPS) are compositionally biased toward low complexity. Polar residues predominate over residues 344-353 (GNATPSTNTS). Low complexity-rich tracts occupy residues 482 to 502 (PGAAATTPPAPGGATTTAPGA), 535 to 580 (SSTS…SVPS), and 641 to 652 (PVSTSPPQSASQ). Residues 653 to 672 (APPPPSSPAPPAHSAPPPAA) show a composition bias toward pro residues. A compositionally biased stretch (basic and acidic residues) spans 1068-1080 (CVKRELDNSEAQG).

As to quaternary structure, component of the bag6/bat3 complex.

The protein localises to the cytoplasm. Its subcellular location is the cytosol. It is found in the nucleus. It localises to the secreted. The protein resides in the extracellular exosome. ATP-independent molecular chaperone preventing the aggregation of misfolded and hydrophobic patches-containing proteins. Functions as part of a cytosolic protein quality control complex, the bag6/bat3 complex, which maintains these client proteins in a soluble state and participates in their proper delivery to the endoplasmic reticulum or alternatively can promote their sorting to the proteasome where they undergo degradation. The bag6/bat3 complex is involved in the post-translational delivery of tail-anchored/type II transmembrane proteins to the endoplasmic reticulum membrane. Similarly, the bag6/bat3 complex also functions as a sorting platform for proteins of the secretory pathway that are mislocalized to the cytosol either delivering them to the proteasome for degradation or to the endoplasmic reticulum. The bag6/bat3 complex also plays a role in the endoplasmic reticulum-associated degradation (ERAD), a quality control mechanism that eliminates unwanted proteins of the endoplasmic reticulum through their retrotranslocation to the cytosol and their targeting to the proteasome. It maintains these retrotranslocated proteins in an unfolded yet soluble state condition in the cytosol to ensure their proper delivery to the proteasome. Also required for selective ubiquitin-mediated degradation of defective nascent chain polypeptides by the proteasome. Also involved in endoplasmic reticulum stress-induced pre-emptive quality control, a mechanism that selectively attenuates the translocation of newly synthesized proteins into the endoplasmic reticulum and reroutes them to the cytosol for proteasomal degradation. May ensure the proper degradation of these proteins and thereby protects the endoplasmic reticulum from protein overload upon stress. By stabilizing a large spectrum of proteins, may indirectly affect different biological processes including apoptosis. By controlling the steady-state expression of the IGF1R receptor, indirectly regulates the insulin-like growth factor receptor signaling pathway. Functionally, when nuclear, may also act as a component of some chromatin regulator complex. This Xenopus laevis (African clawed frog) protein is Large proline-rich protein bag6-B.